The primary structure comprises 284 residues: Insulin-like growth factor-binding protein 2 (284 aa).

A signal peptide spans 1-21; that stretch reads MGLSRYLLGLLLGVLCTPAPA. The region spanning 23-106 is the IGFBP N-terminal domain; the sequence is VLFRCPPCSP…VLGLGTCGKR (84 aa). Cystine bridges form between Cys27-Cys56, Cys30-Cys58, Cys38-Cys59, Cys47-Cys62, Cys70-Cys83, and Cys77-Cys103. The segment at 108–184 is disordered; sequence DTEYGSSQER…KSEDKKRPAR (77 aa). Basic and acidic residues predominate over residues 117–127; it reads RGTELPEERSD. Residues 136–145 show a composition bias toward low complexity; the sequence is EAGPAVAGEA. A compositionally biased stretch (basic and acidic residues) spans 152 to 180; that stretch reads KKEMKEIAVTRERANEQQRSKSNKSEDKK. The Thyroglobulin type-1 domain occupies 184–266; it reads RSLCQLQLDQ…SPTIRGDPEC (83 aa). Intrachain disulfides connect Cys187–Cys221, Cys232–Cys243, and Cys245–Cys266. The Cell attachment site motif lies at 261 to 263; sequence RGD.

As to quaternary structure, interacts with igf1 and igf2.

Its subcellular location is the secreted. Its function is as follows. IGF-binding proteins prolong the half-life of the IGFs and have been shown to either inhibit or stimulate the growth promoting effects of the IGFs on cell culture. They alter the interaction of IGFs with their cell surface receptors. The protein is Insulin-like growth factor-binding protein 2 of Xenopus tropicalis (Western clawed frog).